The primary structure comprises 246 residues: UDP-2,3-diacylglucosamine hydrolase (246 aa).

5 residues coordinate Mn(2+): Asp-8, His-10, Asp-41, Asn-79, and His-114. Position 79 to 80 (79 to 80 (NR)) interacts with substrate. The substrate site is built by Asp-122, Lys-164, Lys-167, and His-195. Residues His-195 and His-197 each contribute to the Mn(2+) site.

The protein belongs to the LpxH family. The cofactor is Mn(2+).

It localises to the cell inner membrane. It carries out the reaction UDP-2-N,3-O-bis[(3R)-3-hydroxytetradecanoyl]-alpha-D-glucosamine + H2O = 2-N,3-O-bis[(3R)-3-hydroxytetradecanoyl]-alpha-D-glucosaminyl 1-phosphate + UMP + 2 H(+). The protein operates within glycolipid biosynthesis; lipid IV(A) biosynthesis; lipid IV(A) from (3R)-3-hydroxytetradecanoyl-[acyl-carrier-protein] and UDP-N-acetyl-alpha-D-glucosamine: step 4/6. Functionally, hydrolyzes the pyrophosphate bond of UDP-2,3-diacylglucosamine to yield 2,3-diacylglucosamine 1-phosphate (lipid X) and UMP by catalyzing the attack of water at the alpha-P atom. Involved in the biosynthesis of lipid A, a phosphorylated glycolipid that anchors the lipopolysaccharide to the outer membrane of the cell. This is UDP-2,3-diacylglucosamine hydrolase from Vibrio cholerae serotype O1 (strain ATCC 39541 / Classical Ogawa 395 / O395).